The chain runs to 130 residues: Small ribosomal subunit protein uS9 (130 aa).

Positions 109-130 (RMKERKKYGLKGARRAPQFSKR) are disordered. The segment covering 111-130 (KERKKYGLKGARRAPQFSKR) has biased composition (basic residues).

The protein belongs to the universal ribosomal protein uS9 family.

This chain is Small ribosomal subunit protein uS9, found in Listeria innocua serovar 6a (strain ATCC BAA-680 / CLIP 11262).